The chain runs to 559 residues: Cellulose biosynthesis protein BcsG (559 aa).

A run of 4 helical transmembrane segments spans residues 34–54 (LLWA…AAFL), 68–88 (HWIA…LPGP), 113–133 (FINW…LFLS), and 138–158 (ITVF…AGPS).

It is found in the cell inner membrane. The polypeptide is Cellulose biosynthesis protein BcsG (bcsG) (Escherichia coli (strain K12)).